The chain runs to 339 residues: Anthranilate phosphoribosyltransferase (339 aa).

5-phospho-alpha-D-ribose 1-diphosphate is bound by residues Gly79, 82–83, Thr87, 89–92, 107–115, and Ser119; these read GD, NVST, and KHGNRAVSS. Gly79 provides a ligand contact to anthranilate. Ser91 is a binding site for Mg(2+). Asn110 contributes to the anthranilate binding site. Arg165 serves as a coordination point for anthranilate. Residues Asp224 and Glu225 each contribute to the Mg(2+) site.

It belongs to the anthranilate phosphoribosyltransferase family. As to quaternary structure, homodimer. Requires Mg(2+) as cofactor.

It catalyses the reaction N-(5-phospho-beta-D-ribosyl)anthranilate + diphosphate = 5-phospho-alpha-D-ribose 1-diphosphate + anthranilate. The protein operates within amino-acid biosynthesis; L-tryptophan biosynthesis; L-tryptophan from chorismate: step 2/5. Functionally, catalyzes the transfer of the phosphoribosyl group of 5-phosphorylribose-1-pyrophosphate (PRPP) to anthranilate to yield N-(5'-phosphoribosyl)-anthranilate (PRA). The protein is Anthranilate phosphoribosyltransferase of Geobacillus kaustophilus (strain HTA426).